A 333-amino-acid chain; its full sequence is Biotin synthase (333 aa).

The Radical SAM core domain maps to 51 to 281 (HFGNQVSLCG…DVHITICGGR (231 aa)). Cys-69, Cys-73, and Cys-76 together coordinate [4Fe-4S] cluster. Cys-206 provides a ligand contact to [2Fe-2S] cluster.

Belongs to the radical SAM superfamily. Biotin synthase family. As to quaternary structure, homodimer. Requires [4Fe-4S] cluster as cofactor. The cofactor is [2Fe-2S] cluster.

It carries out the reaction (4R,5S)-dethiobiotin + (sulfur carrier)-SH + 2 reduced [2Fe-2S]-[ferredoxin] + 2 S-adenosyl-L-methionine = (sulfur carrier)-H + biotin + 2 5'-deoxyadenosine + 2 L-methionine + 2 oxidized [2Fe-2S]-[ferredoxin]. The protein operates within cofactor biosynthesis; biotin biosynthesis; biotin from 7,8-diaminononanoate: step 2/2. In terms of biological role, catalyzes the conversion of dethiobiotin (DTB) to biotin by the insertion of a sulfur atom into dethiobiotin via a radical-based mechanism. The polypeptide is Biotin synthase (Trichlorobacter lovleyi (strain ATCC BAA-1151 / DSM 17278 / SZ) (Geobacter lovleyi)).